A 264-amino-acid polypeptide reads, in one-letter code: Transcription initiation factor TFIID subunit 9 (264 aa).

Residue lysine 5 is modified to N6-acetyllysine. 4 positions are modified to phosphoserine: serine 149, serine 152, serine 155, and serine 158. The interval 150–174 (VGSVSSRPSTPTLGTPTPQAMSVST) is disordered. Over residues 151 to 174 (GSVSSRPSTPTLGTPTPQAMSVST) the composition is skewed to polar residues. 4 positions are modified to phosphothreonine: threonine 159, threonine 161, threonine 164, and threonine 178. Phosphoserine is present on residues serine 181 and serine 196. The interval 233–264 (QNTANESANALKRKREEEDDDDDDDDDDYDNL) is disordered. Residues 249 to 264 (EEDDDDDDDDDDYDNL) are compositionally biased toward acidic residues.

Belongs to the TAF9 family. In terms of assembly, component of the TFIID basal transcription factor complex, composed of TATA-box-binding protein TBP, and a number of TBP-associated factors (TAFs), including TAF1, TAF2, TAF3, TAF4, TAF5, TAF6, TAF7, TAF8, TAF9, TAF10, TAF11, TAF12 and TAF13. Component of the TATA-binding protein-free TAF complex (TFTC), the PCAF histone acetylase complex and the STAGA transcription coactivator-HAT complex. The PCAF complex consists at least of TADA2L/ADA2, SUPT3H/SPT3, TADA3L/ADA3, TAF5L/PAF65-beta, TAF6L/PAF65-alpha, TAF10/TAFII30, TAF12/TAFII20, TAF9/TAFII31 and TRRAP. The STAGA transcription coactivator-HAT complex consists at least of SUPT3H, GCN5L2, SUPT7L, TAF5L, TAF6L, TADA3L, TAD1L, TAF10, TAF12, TRRAP and TAF9. Binds N-terminal domain of p53/TP53 which is essential for transcription. Component of some MLL1/MLL complex, at least composed of the core components KMT2A/MLL1, ASH2L, HCFC1/HCF1, WDR5 and RBBP5, as well as the facultative components BACC1, CHD8, E2F6, HSP70, INO80C, KANSL1, LAS1L, MAX, MCRS1, MGA, MYST1/MOF, PELP1, PHF20, PRP31, RING2, RUVB1/TIP49A, RUVB2/TIP49B, SENP3, TAF1, TAF4, TAF6, TAF7, TAF9 and TEX10. Binds TFIIB and the Herpes simplex virus activator VP16. Forms a heterodimer with TAF6 in a complex with the TAF4B-TAF12 heterodimer. Also interacts with TAF5. Binds directly DNA. Increased DNA binding when complexed with TAF6.

It is found in the nucleus. The TFIID basal transcription factor complex plays a major role in the initiation of RNA polymerase II (Pol II)-dependent transcription. TFIID recognizes and binds promoters with or without a TATA box via its subunit TBP, a TATA-box-binding protein, and promotes assembly of the pre-initiation complex (PIC). The TFIID complex consists of TBP and TBP-associated factors (TAFs), including TAF1, TAF2, TAF3, TAF4, TAF5, TAF6, TAF7, TAF8, TAF9, TAF10, TAF11, TAF12 and TAF13. TAF9 is also a component of the TBP-free TAFII complex (TFTC), the PCAF histone acetylase complex and the STAGA transcription coactivator-HAT complex. TAF9 and its paralog TAF9B are involved in transcriptional activation as well as repression of distinct but overlapping sets of genes. Essential for cell viability. May have a role in gene regulation associated with apoptosis. This chain is Transcription initiation factor TFIID subunit 9, found in Rattus norvegicus (Rat).